Here is a 1054-residue protein sequence, read N- to C-terminus: MAGNDWINSYLEAILDVGPGIDEAKGSLLLRERGRFSPTRYFVEEVVSGFDETDLHRSWIRAQATRSPQERNTRLENMCWRIWNLARQKKQLENEEAQRMAKRRLERERGRREAVADMSEDLSEGEKGDIVVDHSHHGESNRGRLPRINSVDTMEAWMNQQKGKKLYIVLISLHGLIRGENMELGRDSDTGGQVKYVVELARALGSMPGVYRVDLLTRQVSSPEVDWSYGEPTEMLPPRNSENMMDEMGESSGSYIVRIPFGPKDKYVAKELLWPHIPEFVDGALGHIIQMSKVLGEQIGNGHPIWPAAIHGHYADAGDSAALLSGALNVPMLFTGHSLGRDKLEQLLRQGRLSRDEINSTYKIMRRIEAEELSLDASEMVITSTRQEIEEQWRLYDGFDPILERKLRARIKRNVSCYGRFMPRMMVIPPGMEFHHIVPHDGDLDAEPEFNEDSKSPDPHIWTEIMRFFSNPRKPMILALARPDPKKNLTTLVKAFGECKPLRELANLTLIMGNRDNIDEMSGTNASVLLSILKMIDKYDLYGLVAYPKHHKQSDVPDIYRLAAKTKGVFINPAFIEPFGLTLIEAAAHGLPIVATKNGGPVDIHRVLDNGILVDPHNQESIADALLKLVAEKHLWAKCRANGLKNIHLFSWPEHCKSYLSKLASCKPRQPRWLRNEEDDDENSESDSPSDSLRDIQDISLNLKFSFDGDKNESREKGGGSHPDDRASKIENAVLEWSKGVAKGPQRSMSIEKGEHNSNAGKFPALRRRKIMFVIAVDCKPSAGLSESVRKVFAAVENERAEGSVGFILATSFNISEIRHFLVSEKLNPTDFDAFICNSGGDLYYSSHHSEDNPFVVDLYYHSQIEYRWGGEGLRKTLVRWAASITDKKGEKEEHVIIEDEETSADYCYSFKVQKPNVVPPVKEARKVMRIQALRCHVVYCQNGNKINVIPVLASRAQALRYLYLRWGMELSKTVVVVGESGDTDYEEMLGGVHKTVVLSGVCTTATNLLHANRSYPLADVVCFDDLNIFKTHNEECSSTDLRALLEEHGAFKA.

Over residues 104-115 the composition is skewed to basic and acidic residues; the sequence is RLERERGRREAV. 3 disordered regions span residues 104–125, 674–693, and 708–727; these read RLER…LSEG, LRNE…SDSL, and DGDK…DDRA.

It belongs to the glycosyltransferase 1 family. Homodimer or homotetramer.

The enzyme catalyses beta-D-fructose 6-phosphate + UDP-alpha-D-glucose = sucrose 6(F)-phosphate + UDP + H(+). It participates in glycan biosynthesis; sucrose biosynthesis; sucrose from D-fructose 6-phosphate and UDP-alpha-D-glucose: step 1/2. With respect to regulation, activity is regulated by phosphorylation and moderated by concentration of metabolites and light. In terms of biological role, plays a role in photosynthetic sucrose synthesis by catalyzing the rate-limiting step of sucrose biosynthesis from UDP-glucose and fructose- 6-phosphate. Involved in the regulation of carbon partitioning in the leaves of plants. May regulate the synthesis of sucrose and therefore play a major role as a limiting factor in the export of photoassimilates out of the leaf. Plays a role for sucrose availability that is essential for plant growth and fiber elongation. In Craterostigma plantagineum (Blue gem), this protein is Probable sucrose-phosphate synthase 1 (SPS1).